Reading from the N-terminus, the 617-residue chain is Phosphatidylinositol-3,5-bisphosphate 3-phosphatase MTMR6 (617 aa).

Residues 1–101 form the GRAM domain; it reads MEHIRTTKVE…YNSLLQLSKQ (101 aa). The segment at 2-141 is interaction with RAB1B; the sequence is EHIRTTKVEQ…AEYERMGVPN (140 aa). A Phosphotyrosine modification is found at tyrosine 108. The region spanning 124–499 is the Myotubularin phosphatase domain; it reads GWQLIDLAAE…FNFKFWRNMY (376 aa). Positions 248, 273, and 274 each coordinate a 1,2-diacyl-sn-glycero-3-phospho-(1D-myo-inositol-3,5-bisphosphate). 3 residues coordinate a 1,2-diacyl-sn-glycero-3-phospho-(1D-myo-inositol-3-phosphate): asparagine 248, asparagine 273, and isoleucine 274. Cysteine 336 acts as the Phosphocysteine intermediate in catalysis. A 1,2-diacyl-sn-glycero-3-phospho-(1D-myo-inositol-3,5-bisphosphate) is bound by residues serine 337, aspartate 338, glycine 339, tryptophan 340, aspartate 341, arginine 342, lysine 378, and arginine 382. The a 1,2-diacyl-sn-glycero-3-phospho-(1D-myo-inositol-3-phosphate) site is built by serine 337, aspartate 338, glycine 339, tryptophan 340, aspartate 341, and arginine 342. Position 382 (arginine 382) interacts with a 1,2-diacyl-sn-glycero-3-phospho-(1D-myo-inositol-3-phosphate). Phosphoserine occurs at positions 557, 585, and 607.

It belongs to the protein-tyrosine phosphatase family. Non-receptor class myotubularin subfamily. As to quaternary structure, homodimer. Heterodimer (via C-terminus) with MTMR9 (via C-terminus). Interacts with ALKBH4. Interacts with KCNN4. Interacts (via GRAM domain) with RAB1B (in GDP-bound form); the interaction regulates MTMR6 recruitment to the endoplasmic reticulum-Golgi intermediate compartment. As to expression, isoform 1: Ubiquitously expressed including in heart, brain, spleen, lung, liver, muscle, kidney and testis (at protein level). Isoform 2: Expressed in testis (at protein level).

It localises to the cytoplasm. It is found in the endoplasmic reticulum-Golgi intermediate compartment. The protein resides in the cell projection. The protein localises to the ruffle membrane. Its subcellular location is the endoplasmic reticulum. It catalyses the reaction a 1,2-diacyl-sn-glycero-3-phospho-(1D-myo-inositol-3,5-bisphosphate) + H2O = a 1,2-diacyl-sn-glycero-3-phospho-(1D-myo-inositol-5-phosphate) + phosphate. It carries out the reaction a 1,2-diacyl-sn-glycero-3-phospho-(1D-myo-inositol-3-phosphate) + H2O = a 1,2-diacyl-sn-glycero-3-phospho-(1D-myo-inositol) + phosphate. The enzyme catalyses 1,2-dioctanoyl-sn-glycero-3-phospho-(1D-myo-inositol-3,5-bisphosphate) + H2O = 1,2-dioctanoyl-sn-glycero-3-phospho-(1D-myo-inositol-5-phosphate) + phosphate. The catalysed reaction is 1,2-dioctanoyl-sn-glycero-3-phospho-(1-D-myo-inositol-3-phosphate) + H2O = 1,2-dioctanoyl-sn-glycero-3-phospho-(1D-myo-inositol) + phosphate. With respect to regulation, allosterically activated by phosphatidylserine and/or phosphatidylinositol 4-phosphate (PtdIns(4)P), and phosphatidylinositol 5-phosphate (PtdIns(5)P). Interaction with MTMR9 increases catalytic activity towards phosphatidylinositol 3,5-bisphosphate. Functionally, lipid phosphatase that specifically dephosphorylates the D-3 position of phosphatidylinositol 3-phosphate and phosphatidylinositol 3,5-bisphosphate, generating phosphatidylinositol and phosphatidylinositol 5-phosphate. Binds with high affinity to phosphatidylinositol 3,5-bisphosphate (PtdIns(3,5)P2) but also to phosphatidylinositol 3-phosphate (PtdIns(3)P), phosphatidylinositol 4-phosphate (PtdIns(4)P), and phosphatidylinositol 5-phosphate (PtdIns(5)P), phosphatidic acid and phosphatidylserine. Negatively regulates ER-Golgi protein transport. Probably in association with MTMR9, plays a role in the late stages of macropinocytosis by dephosphorylating phosphatidylinositol 3-phosphate in membrane ruffles. Acts as a negative regulator of KCNN4/KCa3.1 channel activity in CD4(+) T-cells possibly by decreasing intracellular levels of phosphatidylinositol 3-phosphate. Negatively regulates proliferation of reactivated CD4(+) T-cells. In complex with MTMR9, negatively regulates DNA damage-induced apoptosis. The formation of the MTMR6-MTMR9 complex stabilizes both MTMR6 and MTMR9 protein levels. The chain is Phosphatidylinositol-3,5-bisphosphate 3-phosphatase MTMR6 from Mus musculus (Mouse).